Consider the following 1067-residue polypeptide: Dorsal-ventral patterning protein tolloid (1067 aa).

A signal peptide spans 1–36 (MKGMRLMPMKMKAKLVVLSVGALWMMMFFLVDYAEG). A propeptide spanning residues 37-136 (RRLSQLPESE…NGQPIQRRRR (100 aa)) is cleaved from the precursor. The 203-residue stretch at 136–338 (RAVTVRKERT…VQANLLYKCA (203 aa)) folds into the Peptidase M12A domain. N-linked (GlcNAc...) asparagine glycosylation is present at Asn176. 5 disulfides stabilise this stretch: Cys179–Cys337, Cys201–Cys223, Cys203–Cys204, Cys340–Cys390, and Cys417–Cys439. Zn(2+) is bound at residue His231. Residue Glu232 is part of the active site. 2 residues coordinate Zn(2+): His235 and His241. Short sequence motifs (cell attachment site) lie at residues 245 to 247 (RGD) and 325 to 327 (RGD). 2 CUB domains span residues 340-477 (CGRT…FEVV) and 478-591 (CGGD…LMLD). Asn441 is a glycosylation site (N-linked (GlcNAc...) asparagine). 6 disulfides stabilise this stretch: Cys478-Cys505, Cys532-Cys554, Cys595-Cys606, Cys602-Cys615, Cys617-Cys630, and Cys634-Cys662. An N-linked (GlcNAc...) asparagine glycan is attached at Asn543. The EGF-like 1; calcium-binding domain maps to 591 to 631 (DVDECKFTDHGCQHLCINTLGSYQCGCRAGYELQANGKTCE). The 120-residue stretch at 634 to 753 (CGGVVDATKS…SGFVAKFVID (120 aa)) folds into the CUB 3 domain. N-linked (GlcNAc...) asparagine glycosylation is found at Asn644 and Asn677. 8 disulfides stabilise this stretch: Cys693–Cys716, Cys757–Cys768, Cys764–Cys777, Cys779–Cys792, Cys797–Cys823, Cys850–Cys872, Cys910–Cys940, and Cys967–Cys989. The 41-residue stretch at 753–793 (DVDECSMNNGGCQHRCRNTFGSYQCSCRNGYTLAENGHNCT) folds into the EGF-like 2; calcium-binding domain. Asn791 carries N-linked (GlcNAc...) asparagine glycosylation. 2 CUB domains span residues 797–909 (CKFE…FVSE) and 910–1026 (CGGY…FMAV). Asn864 and Asn918 each carry an N-linked (GlcNAc...) asparagine glycan.

Zn(2+) serves as cofactor.

In terms of biological role, metalloprotease which cleaves TGF-beta family ligands daw, Actbeta and myo in vitro. Cleavage of daw enhances its signaling activity. Cleaves dorsal-ventral patterning protein sog. Processes sog more efficiently than metalloprotease tld which also cleaves sog. Required for normal dorsal development. TLD may interact physically with DPP-C protein. The polypeptide is Dorsal-ventral patterning protein tolloid (tld) (Drosophila melanogaster (Fruit fly)).